The sequence spans 463 residues: Cytoplasmic tRNA 2-thiolation protein 2 (463 aa).

Belongs to the CTU2/NCS2 family.

It is found in the cytoplasm. Its pathway is tRNA modification; 5-methoxycarbonylmethyl-2-thiouridine-tRNA biosynthesis. In terms of biological role, plays a central role in 2-thiolation of mcm(5)S(2)U at tRNA wobble positions of tRNA(Lys), tRNA(Glu) and tRNA(Gln). May act by forming a heterodimer with NCS6 that ligates sulfur from thiocarboxylated URM1 onto the uridine of tRNAs at wobble position. Prior mcm(5) tRNA modification by the elongator complex is required for 2-thiolation. May also be involved in protein urmylation. The sequence is that of Cytoplasmic tRNA 2-thiolation protein 2 from Kluyveromyces lactis (strain ATCC 8585 / CBS 2359 / DSM 70799 / NBRC 1267 / NRRL Y-1140 / WM37) (Yeast).